A 317-amino-acid chain; its full sequence is Melanocyte-stimulating hormone receptor (317 aa).

The Extracellular portion of the chain corresponds to 1-37; sequence MPIHGAPRKLLGSLNSTPTATPKLGLAANHTGAPCLE. An N-linked (GlcNAc...) asparagine glycan is attached at Asn-29. A helical transmembrane segment spans residues 38–63; that stretch reads VSIPDGLFLSLGLVSLVENVLVVAAI. Residues 64 to 72 lie on the Cytoplasmic side of the membrane; that stretch reads AKNRNLHSP. Residues 73–93 traverse the membrane as a helical segment; that stretch reads MYCFICCLALSDLLVSGSNML. The Extracellular portion of the chain corresponds to 94–118; sequence EMAVVLLLEGGALATRASVVQQLHN. A helical membrane pass occupies residues 119 to 140; that stretch reads TIDVLTCSSMLCSLCFLGAIAV. Residues 141 to 163 are Cytoplasmic-facing; the sequence is DRHISIFYALRYHSIMTLPRAQR. The helical transmembrane segment at 164–183 threads the bilayer; that stretch reads VIAAIWVASILSSTLFITYY. The Extracellular segment spans residues 184-191; it reads DHAAVLLC. The chain crosses the membrane as a helical span at residues 192-211; sequence LVVFFLAMLVLMAVLYVHML. Over 212-240 the chain is Cytoplasmic; sequence ARACQHAQGITRLHKRQPPAHQGFGLRGA. A helical transmembrane segment spans residues 241-266; the sequence is ATLTILLGIFFLCWGPFFLHLKLVVF. Residues 267–279 lie on the Extracellular side of the membrane; it reads CPQHLTCSCIFKN. A helical membrane pass occupies residues 280–300; it reads FKVFLTLIICNTIIDPLIYAF. At 301–317 the chain is on the cytoplasmic side; it reads RSQELRRTLKEVLLCSW. Residue Cys-315 is the site of S-palmitoyl cysteine attachment.

Belongs to the G-protein coupled receptor 1 family. As to quaternary structure, interacts with MGRN1, but does not undergo MGRN1-mediated ubiquitination; this interaction competes with GNAS-binding and thus inhibits agonist-induced cAMP production. Interacts with OPN3; the interaction results in a decrease in MC1R-mediated cAMP signaling and ultimately a decrease in melanin production in melanocytes.

The protein resides in the cell membrane. Its function is as follows. Receptor for MSH (alpha, beta and gamma) and ACTH. The activity of this receptor is mediated by G proteins which activate adenylate cyclase. Mediates melanogenesis, the production of eumelanin (black/brown) and phaeomelanin (red/yellow), via regulation of cAMP signaling in melanocytes. The protein is Melanocyte-stimulating hormone receptor (MC1R) of Saimiri oerstedii (Central American squirrel monkey).